A 223-amino-acid polypeptide reads, in one-letter code: Uracil-DNA glycosylase (223 aa).

Asp-67 functions as the Proton acceptor in the catalytic mechanism.

This sequence belongs to the uracil-DNA glycosylase (UDG) superfamily. UNG family.

The protein resides in the cytoplasm. The enzyme catalyses Hydrolyzes single-stranded DNA or mismatched double-stranded DNA and polynucleotides, releasing free uracil.. Excises uracil residues from the DNA which can arise as a result of misincorporation of dUMP residues by DNA polymerase or due to deamination of cytosine. This Borrelia duttonii (strain Ly) protein is Uracil-DNA glycosylase.